A 113-amino-acid chain; its full sequence is UPF0251 protein Teth514_1147 (113 aa).

Belongs to the UPF0251 family.

The protein is UPF0251 protein Teth514_1147 of Thermoanaerobacter sp. (strain X514).